We begin with the raw amino-acid sequence, 475 residues long: uncharacterized protein (475 aa).

Residues 19–39 traverse the membrane as a helical segment; that stretch reads IKVGVFFVAILLILTGILLTI. Disordered stretches follow at residues 55-79 and 330-350; these read GEYH…NATS and SSPF…PHKG. Over residues 60-79 the composition is skewed to polar residues; that stretch reads LNTSPNENSTALQPDENATS. Over residues 336–348 the composition is skewed to basic residues; it reads NRRHPVTGRIRPH. Residue H348 participates in Zn(2+) binding.

The protein in the central section; belongs to the OapA family. It in the C-terminal section; belongs to the peptidase M23B family. Zn(2+) serves as cofactor.

It is found in the cell membrane. This is an uncharacterized protein from Haemophilus influenzae (strain ATCC 51907 / DSM 11121 / KW20 / Rd).